A 958-amino-acid polypeptide reads, in one-letter code: DNA repair and recombination protein RDH54 (958 aa).

The segment at 189–217 is disordered; sequence EALSQNMGNPSPPTTSTTETVPSTKNDGG. Over residues 202 to 212 the composition is skewed to low complexity; sequence TTSTTETVPST. The 189-residue stretch at 333–521 folds into the Helicase ATP-binding domain; sequence LENDSDISGC…FTIIDFINPG (189 aa). 380-387 is a binding site for ATP; it reads IPLTGLCK. Positions 506–509 match the DEGH box motif; it reads NDLN. Lysine 649 is covalently cross-linked (Glycyl lysine isopeptide (Lys-Gly) (interchain with G-Cter in ubiquitin)). In terms of domain architecture, Helicase C-terminal spans 665–824; that stretch reads KLKVLMTLLE…DSEMRNKESS (160 aa).

This sequence belongs to the SNF2/RAD54 helicase family. Interacts with RAD51 and DMC1.

Its subcellular location is the nucleus. It carries out the reaction ATP + H2O = ADP + phosphate + H(+). Functionally, involved in the recombinational repair of double-strand breaks (DSB) in DNA during mitosis and meiosis. Has DNA dependent ATPase activity. Promotes D-loop (displacement loop) formation with RAD51 recombinase. Modifies the topology of double-stranded DNA during the D-loop reaction to facilitate the invasion of the homologous duplex molecule by the initiating single-stranded DNA substrate. Required for adaptation from G2/M checkpoint arrest induced by a double strand break, by participating in monitoring the extent of single-stranded DNA produced by resection of DNA ends. This role is distinct from its roles in recombination. Promotes colocalization of RAD51 and DMC1 during meiotic recombination. Involved in crossover interference. This Saccharomyces cerevisiae (strain ATCC 204508 / S288c) (Baker's yeast) protein is DNA repair and recombination protein RDH54 (RDH54).